A 232-amino-acid polypeptide reads, in one-letter code: BTB/POZ domain-containing protein KCTD11 (232 aa).

One can recognise a BTB domain in the interval 1–49 (MLGAMFRADTLMPANLNPQGDGHYFIDRDGKAFRHILNFLRLGRLDLPR).

In terms of assembly, homopentamer. Interacts with KCTD6 and KCTD21; KCTD11 and KCTD6 or KCTD21 may associate in pentameric assemblies. Component of the BCR(KCTD11) E3 ubiquitin ligase complex, at least composed of CUL3 and KCTD11 and RBX1. Interacts (via BTB domain) with CUL3; initially a 4:4 stoichiometry has been reported, however, electron microscopy revealed pentameric states of the BTB domain. As to expression, weakly expressed in lung. In the cerebellum, higher expression in non proliferating external granule cells layer than in highly proliferating ones.

Its pathway is protein modification; protein ubiquitination. In terms of biological role, plays a role as a marker and a regulator of neuronal differentiation; Up-regulated by a variety of neurogenic signals, such as retinoic acid, epidermal growth factor/EGF and NGFB/nerve growth factor. Induces apoptosis, growth arrest and the expression of cyclin-dependent kinase inhibitor CDKN1B. Plays a role as a tumor repressor and inhibits cell growth and tumorigenicity of medulloblastoma (MDB). Acts as a probable substrate-specific adapter for a BCR (BTB-CUL3-RBX1) E3 ubiquitin-protein ligase complex towards HDAC1. Functions as antagonist of the Hedgehog pathway on cell proliferation and differentiation by affecting the nuclear transfer of transcription factor GLI1, thus maintaining cerebellar granule cells in undifferentiated state, this effect probably occurs via HDAC1 down-regulation, keeping GLI1 acetylated and inactive. When knock-down, Hedgehog antagonism is impaired and proliferation of granule cells is sustained. Activates the caspase cascade. This Mus musculus (Mouse) protein is BTB/POZ domain-containing protein KCTD11 (Kctd11).